The primary structure comprises 75 residues: Cytochrome c oxidase subunit 6C (75 aa).

Over 1-13 the chain is Mitochondrial matrix; it reads MAPEVLPKPQMRG. A helical transmembrane segment spans residues 14-54; it reads LLARRLRFHMVTGFVLSLGVAALYKVGVADKRKKAYADFYR. Topologically, residues 55–75 are mitochondrial intermembrane; that stretch reads NYDAMKDFEEMRKAGIFQSVK.

The protein belongs to the cytochrome c oxidase subunit 6c family. Component of the cytochrome c oxidase (complex IV, CIV), a multisubunit enzyme composed of 14 subunits. The complex is composed of a catalytic core of 3 subunits MT-CO1, MT-CO2 and MT-CO3, encoded in the mitochondrial DNA, and 11 supernumerary subunits COX4I, COX5A, COX5B, COX6A, COX6B, COX6C, COX7A, COX7B, COX7C, COX8 and NDUFA4, which are encoded in the nuclear genome. The complex exists as a monomer or a dimer and forms supercomplexes (SCs) in the inner mitochondrial membrane with NADH-ubiquinone oxidoreductase (complex I, CI) and ubiquinol-cytochrome c oxidoreductase (cytochrome b-c1 complex, complex III, CIII), resulting in different assemblies (supercomplex SCI(1)III(2)IV(1) and megacomplex MCI(2)III(2)IV(2)).

The protein localises to the mitochondrion inner membrane. It participates in energy metabolism; oxidative phosphorylation. In terms of biological role, component of the cytochrome c oxidase, the last enzyme in the mitochondrial electron transport chain which drives oxidative phosphorylation. The respiratory chain contains 3 multisubunit complexes succinate dehydrogenase (complex II, CII), ubiquinol-cytochrome c oxidoreductase (cytochrome b-c1 complex, complex III, CIII) and cytochrome c oxidase (complex IV, CIV), that cooperate to transfer electrons derived from NADH and succinate to molecular oxygen, creating an electrochemical gradient over the inner membrane that drives transmembrane transport and the ATP synthase. Cytochrome c oxidase is the component of the respiratory chain that catalyzes the reduction of oxygen to water. Electrons originating from reduced cytochrome c in the intermembrane space (IMS) are transferred via the dinuclear copper A center (CU(A)) of subunit 2 and heme A of subunit 1 to the active site in subunit 1, a binuclear center (BNC) formed by heme A3 and copper B (CU(B)). The BNC reduces molecular oxygen to 2 water molecules using 4 electrons from cytochrome c in the IMS and 4 protons from the mitochondrial matrix. In Macaca silenus (Lion-tailed macaque), this protein is Cytochrome c oxidase subunit 6C (COX6C).